A 384-amino-acid polypeptide reads, in one-letter code: Odorant receptor 33c (384 aa).

Residues 1-35 are Cytoplasmic-facing; it reads MVIIDSLSFYRPFWICMRLLVPTFFKDSSRPVQLY. Residues 36–56 traverse the membrane as a helical segment; that stretch reads VVLLHILVTLWFPLHLLLHLL. Residues 57-63 are Extracellular-facing; the sequence is LLPSTAE. Residues 64 to 84 form a helical membrane-spanning segment; sequence FFKNLTMSLTCVACSLKHVAH. Residues 85 to 128 are Cytoplasmic-facing; it reads LYHLPQIVEIESLIEQLDTFIASEQEHRYYRDHVHCHARRFTRC. A helical membrane pass occupies residues 129-149; sequence LYISFGMIYALFLFGVFVQVI. The Extracellular segment spans residues 150–169; it reads SGNWELLYPAYFPFDLESNR. A helical transmembrane segment spans residues 170–190; that stretch reads FLGAVALGYQVFSMLVEGFQG. Residues 191-251 lie on the Cytoplasmic side of the membrane; that stretch reads LGNDTYTPLT…LVRFHNLVSR (61 aa). The helical transmembrane segment at 252–272 threads the bilayer; it reads TISEVQLVQLGGCGATLCIIV. The Extracellular portion of the chain corresponds to 273–274; that stretch reads SY. The chain crosses the membrane as a helical span at residues 275-295; sequence MLFFVGDTISLVYYLVFFGVV. The Cytoplasmic segment spans residues 296–358; that stretch reads CVQLFPSCYF…WIIKAGGLIE (63 aa). Residues 359 to 379 traverse the membrane as a helical segment; sequence LNLNAFFATLKMAYSLFAVVV. Over 380 to 384 the chain is Extracellular; it reads RAKGI.

This sequence belongs to the insect chemoreceptor superfamily. Heteromeric odorant receptor channel (TC 1.A.69) family. Or2a subfamily. Interacts with Orco. Complexes exist early in the endomembrane system in olfactory sensory neurons (OSNs), coupling these complexes to the conserved ciliary trafficking pathway. As to expression, expressed in the antenna and in a subset of 18 olfactory receptor neurons in the maxillary palp.

It is found in the cell membrane. In terms of biological role, odorant receptor which mediates acceptance or avoidance behavior, depending on its substrates. The odorant receptor repertoire encodes a large collection of odor stimuli that vary widely in identity, intensity, and duration. May form a complex with Orco to form odorant-sensing units, providing sensitive and prolonged odorant signaling and calcium permeability. In Drosophila melanogaster (Fruit fly), this protein is Odorant receptor 33c (Or33c).